A 375-amino-acid polypeptide reads, in one-letter code: Porin Omp2b (375 aa).

An N-terminal signal peptide occupies residues 1–22 (MNIKSLLLGSAAALVAASGAQA).

The protein belongs to the alphaproteobacteria porin family. In terms of assembly, homotrimer.

It is found in the cell outer membrane. In terms of biological role, forms passive diffusion pores that allow small molecular weight hydrophilic materials across the outer membrane. The sequence is that of Porin Omp2b (omp2b) from Brucella suis.